The following is a 319-amino-acid chain: Solute carrier family 25 member 34 (319 aa).

The segment at 1–22 (MNSAFSGPSSPTPGPSPPRPPL) is disordered. The span at 10–22 (SPTPGPSPPRPPL) shows a compositional bias: pro residues. Solcar repeat units follow at residues 22 to 115 (LWPP…MQAA), 119 to 212 (DGPC…AKDW), and 222 to 313 (LSSL…LRQR). 6 consecutive transmembrane segments (helical) span residues 25–45 (PLDFGLGALACCGACVFTNPL), 63–83 (SYRRLYRGVLQALWVVGRTDG), 116–138 (GVTDGPCCSLIAGAAAGALGAFI), 188–209 (VNGAVPRVMVGSATQLATFSSA), 224–244 (SLNTLCAAVMSGVAVSIIMTP), and 296–319 (LAPHTTLSMLLWDVLRQRALPYTH).

This sequence belongs to the mitochondrial carrier (TC 2.A.29) family.

The protein localises to the mitochondrion inner membrane. This is Solute carrier family 25 member 34 (slc25a34) from Danio rerio (Zebrafish).